Reading from the N-terminus, the 390-residue chain is MAQKEGLPAGRLSAMVIDEDKCHADSTSYMLSAELNFSVTVFTSPIKALDFLQNHAEGVDLVLADVHMEEMNGFDFLKVARELHKSIQVIMMSTETTMYTMKRCVKLGAQFLVNKPLDAGTIKNLWQYVDLKVLRMEKIKDLLQGIGDESTCANETNSLAENPKNDTKKKYYLMWTPHLQKKFLHALQILGKDASPKNIKKIMGVDNIDCRQIAAHLQKHRLRLTKDLKKASFTTDTSKDESNSRIGPAESHHVCRNASTLQPRSNTQPTETTMQILSEDAEYDDVYAAMRRALQYGIVFDESKHSSDPSGDEDEQVVVGGDQDGCANEANDIDSSGDHHQVAAVVTKPCNTNASQEIINKMTNSDGMQATKGSKAAVFRLVDYSESDSD.

The 118-residue stretch at 13–130 (SAMVIDEDKC…TIKNLWQYVD (118 aa)) folds into the Response regulatory domain. Asp65 carries the post-translational modification 4-aspartylphosphate. The segment at residues 169–226 (KKYYLMWTPHLQKKFLHALQILGKDASPKNIKKIMGVDNIDCRQIAAHLQKHRLRLTK) is a DNA-binding region (myb-like GARP). 2 disordered regions span residues 233–271 (FTTDTSKDESNSRIGPAESHHVCRNASTLQPRSNTQPTE) and 303–339 (SKHSSDPSGDEDEQVVVGGDQDGCANEANDIDSSGDH). Over residues 257-271 (NASTLQPRSNTQPTE) the composition is skewed to polar residues.

It belongs to the ARR family. Type-B subfamily. Two-component system major event consists of a His-to-Asp phosphorelay between a sensor histidine kinase (HK) and a response regulator (RR). In plants, the His-to-Asp phosphorelay involves an additional intermediate named Histidine-containing phosphotransfer protein (HPt). This multistep phosphorelay consists of a His-Asp-His-Asp sequential transfer of a phosphate group between first a His and an Asp of the HK protein, followed by the transfer to a conserved His of the HPt protein and finally the transfer to an Asp in the receiver domain of the RR protein.

It localises to the nucleus. Its function is as follows. Transcriptional activator that binds specific DNA sequence. Functions as a response regulator involved in His-to-Asp phosphorelay signal transduction system. Phosphorylation of the Asp residue in the receiver domain activates the ability of the protein to promote the transcription of target genes. May directly activate some type-A response regulators in response to cytokinins. In Oryza sativa subsp. indica (Rice), this protein is Two-component response regulator ORR29.